A 401-amino-acid chain; its full sequence is MKTLWQHCNVASMASGVYSIIEDAAMVTSGAHIEWIGRRSEAPAGDYAQVNDLAGAWVTPGFIDCHTHTVFGGNRSGEFEQRLQGVSYAEIAAAGGGIASTVRATRAATEEELFGSARKRLLSLLRDGVTSVEIKSGYGLDLASERKILRVIRRLGEELPVSVRSTCLAAHALPPEYAERSDAYIEHICSDMLPALAAEGLVDAVDAFCEYLAFSPEQVERVFIAAQQLGLPVKLHAEQLSSLHGSSLAARYHALSADHLEFMTEEDAIAMAASGTVAVLLPGAFYFLRETQQPPMEALRKHGVKIAVASDLNPGTSPALSLRLMLNMACTCFRMTPEEALAGVTLHAAQALGMEKTHGSLEVGKVADFVAWQIDRPADLAYWLGGDLEKRVVRHGVEVTV.

Fe(3+)-binding residues include H66 and H68. Zn(2+) is bound by residues H66 and H68. 3 residues coordinate 4-imidazolone-5-propanoate: R75, Y138, and H171. Y138 is an N-formimidoyl-L-glutamate binding site. Residue H236 coordinates Fe(3+). Residue H236 coordinates Zn(2+). A 4-imidazolone-5-propanoate-binding site is contributed by Q239. D311 provides a ligand contact to Fe(3+). Residue D311 coordinates Zn(2+). N-formimidoyl-L-glutamate is bound by residues N313 and G315. T316 is a binding site for 4-imidazolone-5-propanoate.

Belongs to the metallo-dependent hydrolases superfamily. HutI family. Zn(2+) serves as cofactor. Fe(3+) is required as a cofactor.

The protein localises to the cytoplasm. The enzyme catalyses 4-imidazolone-5-propanoate + H2O = N-formimidoyl-L-glutamate. The protein operates within amino-acid degradation; L-histidine degradation into L-glutamate; N-formimidoyl-L-glutamate from L-histidine: step 3/3. In terms of biological role, catalyzes the hydrolytic cleavage of the carbon-nitrogen bond in imidazolone-5-propanoate to yield N-formimidoyl-L-glutamate. It is the third step in the universal histidine degradation pathway. This is Imidazolonepropionase from Pseudomonas fluorescens (strain ATCC BAA-477 / NRRL B-23932 / Pf-5).